The primary structure comprises 324 residues: 26S proteasome regulatory subunit rpn8 (324 aa).

The 135-residue stretch at 17–151 (VIVHPLVLLS…TNAYFAIDEI (135 aa)) folds into the MPN domain.

This sequence belongs to the peptidase M67A family.

Acts as a regulatory subunit of the 26S proteasome which is involved in the ATP-dependent degradation of ubiquitinated proteins. The polypeptide is 26S proteasome regulatory subunit rpn8 (rpn8) (Schizosaccharomyces pombe (strain 972 / ATCC 24843) (Fission yeast)).